The primary structure comprises 260 residues: Global transcriptional regulator CodY (260 aa).

The tract at residues 1–159 is GAF domain; that stretch reads MPNLLEKTRK…SSTVVGIQLL (159 aa). A DNA-binding region (H-T-H motif) is located at residues 207–226; that stretch reads ASVIADRIGITRSVIVNALR.

Belongs to the CodY family.

The protein resides in the cytoplasm. In terms of biological role, DNA-binding global transcriptional regulator which is involved in the adaptive response to starvation and acts by directly or indirectly controlling the expression of numerous genes in response to nutrient availability. During rapid exponential growth, CodY is highly active and represses genes whose products allow adaptation to nutrient depletion. This chain is Global transcriptional regulator CodY, found in Streptococcus equi subsp. zooepidemicus (strain H70).